A 315-amino-acid polypeptide reads, in one-letter code: Pantothenate kinase (315 aa).

Gly-94–Ser-101 lines the ATP pocket.

It belongs to the prokaryotic pantothenate kinase family.

It localises to the cytoplasm. The catalysed reaction is (R)-pantothenate + ATP = (R)-4'-phosphopantothenate + ADP + H(+). It functions in the pathway cofactor biosynthesis; coenzyme A biosynthesis; CoA from (R)-pantothenate: step 1/5. This is Pantothenate kinase from Citrobacter koseri (strain ATCC BAA-895 / CDC 4225-83 / SGSC4696).